We begin with the raw amino-acid sequence, 233 residues long: Phosphatidylserine decarboxylase proenzyme (233 aa).

The Schiff-base intermediate with substrate; via pyruvic acid role is filled by Ser-201. Residue Ser-201 is modified to Pyruvic acid (Ser); by autocatalysis.

It belongs to the phosphatidylserine decarboxylase family. PSD-A subfamily. Heterodimer of a large membrane-associated beta subunit and a small pyruvoyl-containing alpha subunit. Requires pyruvate as cofactor. Is synthesized initially as an inactive proenzyme. Formation of the active enzyme involves a self-maturation process in which the active site pyruvoyl group is generated from an internal serine residue via an autocatalytic post-translational modification. Two non-identical subunits are generated from the proenzyme in this reaction, and the pyruvate is formed at the N-terminus of the alpha chain, which is derived from the carboxyl end of the proenzyme. The post-translation cleavage follows an unusual pathway, termed non-hydrolytic serinolysis, in which the side chain hydroxyl group of the serine supplies its oxygen atom to form the C-terminus of the beta chain, while the remainder of the serine residue undergoes an oxidative deamination to produce ammonia and the pyruvoyl prosthetic group on the alpha chain.

Its subcellular location is the cell membrane. It catalyses the reaction a 1,2-diacyl-sn-glycero-3-phospho-L-serine + H(+) = a 1,2-diacyl-sn-glycero-3-phosphoethanolamine + CO2. Its pathway is phospholipid metabolism; phosphatidylethanolamine biosynthesis; phosphatidylethanolamine from CDP-diacylglycerol: step 2/2. In terms of biological role, catalyzes the formation of phosphatidylethanolamine (PtdEtn) from phosphatidylserine (PtdSer). The protein is Phosphatidylserine decarboxylase proenzyme of Mycolicibacterium vanbaalenii (strain DSM 7251 / JCM 13017 / BCRC 16820 / KCTC 9966 / NRRL B-24157 / PYR-1) (Mycobacterium vanbaalenii).